We begin with the raw amino-acid sequence, 1759 residues long: Zinc finger protein castor homolog 1 (1759 aa).

2 disordered regions span residues 1–26 and 46–175; these read MDLG…PKRK and KRAD…SSLR. Composition is skewed to basic and acidic residues over residues 77–88 and 137–160; these read PRSEEDKRRAVI and EEPS…KEDS. Residues 161–171 are compositionally biased toward polar residues; it reads GPSTRQASGEA. Lysine 288 participates in a covalent cross-link: Glycyl lysine isopeptide (Lys-Gly) (interchain with G-Cter in SUMO2). Residues 374–420 form a disordered region; sequence SKYDVRGIQKPGPAKVPPTPSLAPAPLASVPSAPSAPGPGPEPPASL. Residues 387–396 show a composition bias toward pro residues; that stretch reads AKVPPTPSLA. Residues 397–406 are compositionally biased toward low complexity; the sequence is PAPLASVPSA. A compositionally biased stretch (pro residues) spans 407-417; the sequence is PSAPGPGPEPP. 3 consecutive C2H2-type zinc fingers follow at residues 551–575, 610–634, and 668–692; these read YHCM…ENFH, FHCR…KSYH, and FHCI…KRKH. 4 disordered regions span residues 686–723, 736–776, 824–843, and 889–949; these read TSHK…SSND, SSLS…SGLL, VSSG…VASG, and ATFD…AVPA. The segment covering 687–698 has biased composition (basic residues); it reads SHKRKHERRHIR. The span at 699 to 712 shows a compositional bias: low complexity; sequence SSGALGLPPSLLGA. Residues serine 720 and serine 721 each carry the phosphoserine modification. The span at 736–764 shows a compositional bias: low complexity; it reads SSLSASPTSQQSSASLAAATAATEAGPSA. Residues 925–939 are compositionally biased toward basic and acidic residues; that stretch reads ASQDRSLDLTVKEPS. Lysine 975 participates in a covalent cross-link: Glycyl lysine isopeptide (Lys-Gly) (interchain with G-Cter in SUMO2). Phosphoserine is present on serine 981. A C2H2-type 4 zinc finger spans residues 1031 to 1055; the sequence is FHCVVEECGALFSTLDGAIKHANFH. The tract at residues 1067-1111 is disordered; it reads TEAAFPASAAETKPPMAPSSPPVPPVTTATVSSLEGPAPSPASVP. Over residues 1081–1091 the composition is skewed to pro residues; the sequence is PMAPSSPPVPP. The segment at 1300-1324 adopts a C2H2-type 5 zinc-finger fold; sequence FHCIREGCQFSFLLKHQMTSHARKH. A disordered region spans residues 1367–1392; it reads ESSTMDRSCSSTPVGNESTAAGNTIS. C2H2-type zinc fingers lie at residues 1457 to 1481, 1515 to 1537, and 1571 to 1595; these read YHCT…AQHH, FHCL…RKHH, and FHCT…KRKH. Disordered stretches follow at residues 1589 to 1620 and 1643 to 1736; these read DSHK…DGSL and LGDA…AGAR. The span at 1655-1673 shows a compositional bias: low complexity; sequence AAPGPREGAAAAAAAAGES. Positions 1674–1723 are enriched in acidic residues; that stretch reads SQEDEEEELELPEEEAEDDEDEDDDEDDDDEDDDEDDDDEDLRTDSEESL. Positions 1724–1736 are enriched in low complexity; the sequence is PEAAAEAAGAGAR.

In terms of tissue distribution, expressed in heart, lung, skeletal muscle, pancreas, testis, small intestine, and stomach, but it is not detectable in the adult brain.

It localises to the nucleus. Functionally, transcriptional activator. Involved in vascular assembly and morphogenesis through direct transcriptional regulation of EGFL7. The sequence is that of Zinc finger protein castor homolog 1 (CASZ1) from Homo sapiens (Human).